A 111-amino-acid chain; its full sequence is Small ribosomal subunit protein bS6 (111 aa).

This sequence belongs to the bacterial ribosomal protein bS6 family.

Binds together with bS18 to 16S ribosomal RNA. The sequence is that of Small ribosomal subunit protein bS6 from Francisella philomiragia subsp. philomiragia (strain ATCC 25017 / CCUG 19701 / FSC 153 / O#319-036).